Consider the following 439-residue polypeptide: Proline--tRNA ligase (439 aa).

This sequence belongs to the class-II aminoacyl-tRNA synthetase family. ProS type 2 subfamily. As to quaternary structure, homodimer.

The protein resides in the cytoplasm. It carries out the reaction tRNA(Pro) + L-proline + ATP = L-prolyl-tRNA(Pro) + AMP + diphosphate. Functionally, catalyzes the attachment of proline to tRNA(Pro) in a two-step reaction: proline is first activated by ATP to form Pro-AMP and then transferred to the acceptor end of tRNA(Pro). The polypeptide is Proline--tRNA ligase (Rhodopseudomonas palustris (strain BisB5)).